A 212-amino-acid chain; its full sequence is Large ribosomal subunit protein uL3 (212 aa).

An N5-methylglutamine modification is found at Gln-153.

This sequence belongs to the universal ribosomal protein uL3 family. As to quaternary structure, part of the 50S ribosomal subunit. Forms a cluster with proteins L14 and L19. In terms of processing, methylated by PrmB.

One of the primary rRNA binding proteins, it binds directly near the 3'-end of the 23S rRNA, where it nucleates assembly of the 50S subunit. This is Large ribosomal subunit protein uL3 from Shewanella halifaxensis (strain HAW-EB4).